The chain runs to 491 residues: Probable succinate-semialdehyde dehydrogenase [NADP(+)] (491 aa).

Residues Trp-163–Asn-164, Lys-187–Glu-190, and Gly-241–Ser-242 contribute to the NADP(+) site. The Proton acceptor role is filled by Glu-263. Leu-264 lines the NADP(+) pocket. Catalysis depends on Cys-297, which acts as the Nucleophile. Position 394 (Glu-394) interacts with NADP(+).

It belongs to the aldehyde dehydrogenase family.

It catalyses the reaction succinate semialdehyde + NADP(+) + H2O = succinate + NADPH + 2 H(+). It functions in the pathway amino-acid degradation; 4-aminobutanoate degradation. Catalyzes the NADP(+) dependent oxidation of succinate semialdehyde to succinate. This chain is Probable succinate-semialdehyde dehydrogenase [NADP(+)] (gabD), found in Sinorhizobium fredii (strain NBRC 101917 / NGR234).